A 413-amino-acid chain; its full sequence is Aspartate aminotransferase, cytoplasmic (413 aa).

Residues glycine 39 and tryptophan 141 each contribute to the L-aspartate site. Position 149 is a phosphoserine (serine 149). L-aspartate is bound at residue asparagine 195. Lysine 259 is modified (N6-(pyridoxal phosphate)lysine). Arginine 387 is an L-aspartate binding site.

This sequence belongs to the class-I pyridoxal-phosphate-dependent aminotransferase family. In terms of assembly, homodimer. Pyridoxal 5'-phosphate serves as cofactor.

The protein localises to the cytoplasm. It catalyses the reaction L-aspartate + 2-oxoglutarate = oxaloacetate + L-glutamate. The enzyme catalyses L-cysteine + 2-oxoglutarate = 2-oxo-3-sulfanylpropanoate + L-glutamate. It carries out the reaction (2S)-2-aminobutanoate + 2-oxoglutarate = 2-oxobutanoate + L-glutamate. The catalysed reaction is 3-sulfino-L-alanine + 2-oxoglutarate = 3-sulfinopyruvate + L-glutamate. Functionally, biosynthesis of L-glutamate from L-aspartate or L-cysteine. Important regulator of levels of glutamate, the major excitatory neurotransmitter of the vertebrate central nervous system. Acts as a scavenger of glutamate in brain neuroprotection. The aspartate aminotransferase activity is involved in hepatic glucose synthesis during development and in adipocyte glyceroneogenesis. Using L-cysteine as substrate, regulates levels of mercaptopyruvate, an important source of hydrogen sulfide. Mercaptopyruvate is converted into H(2)S via the action of 3-mercaptopyruvate sulfurtransferase (3MST). Hydrogen sulfide is an important synaptic modulator and neuroprotectant in the brain. The protein is Aspartate aminotransferase, cytoplasmic of Macaca fascicularis (Crab-eating macaque).